The sequence spans 331 residues: Laforin (331 aa).

Residues 1–124 form the CBM20 domain; it reads MLFRFGVVVP…NNLVDGVYCL (124 aa). A Phosphoserine; by AMPK modification is found at S25. Substrate is bound by residues W32, K87, 103–107, D197, D235, and R241; that span reads GPHHD. The 168-residue stretch at 156–323 folds into the Tyrosine-protein phosphatase domain; it reads HYSRILPNIW…QQDFFQKFGK (168 aa). The Phosphocysteine intermediate role is filled by C266. Positions 266–272 match the Glucan phosphatase signature motif CXAGXGR motif; the sequence is CNAGVGR. Residues 267–272 and Y304 each bind substrate; that span reads NAGVGR.

This sequence belongs to the protein-tyrosine phosphatase family. Homodimer. Interacts with itself. Interacts with PPP1R3B, PPP1R3C, PPP1R3D, HIRIP5, and EPM2AIP1. Binds glycogen and Lafora bodies. Interacts with NHLRC1/malin (via the NHL repeats). Forms a complex with NHLRC1/malin and HSP70. Interacts with PPP1R3D; in the presence of NHLC1/malin the interaction leads to ubiquitination and autophagic degradation of PPP1R3D. Interacts (via the phosphatase domain) with MAPT/Tau; the interaction dephosphorylates MAPT. Interacts with PRDM8. Post-translationally, polyubiquitinated by NHLRC1/malin. In terms of processing, phosphorylation on Ser-25 by AMPK affects the phosphatase activity of the enzyme and its ability to homodimerize and interact with NHLRC1, PPP1R3C or PRKAA2. Widely expressed.

The protein resides in the cytoplasm. Its subcellular location is the endoplasmic reticulum membrane. It is found in the cell membrane. The catalysed reaction is O-phospho-L-tyrosyl-[protein] + H2O = L-tyrosyl-[protein] + phosphate. The enzyme catalyses O-phospho-L-seryl-[protein] + H2O = L-seryl-[protein] + phosphate. It catalyses the reaction O-phospho-L-threonyl-[protein] + H2O = L-threonyl-[protein] + phosphate. Its function is as follows. Plays an important role in preventing glycogen hyperphosphorylation and the formation of insoluble aggregates, via its activity as glycogen phosphatase, and by promoting the ubiquitination of proteins involved in glycogen metabolism via its interaction with the E3 ubiquitin ligase NHLRC1/malin. Dephosphorylates phosphotyrosine and synthetic substrates, such as para-nitrophenylphosphate (pNPP), and has low activity with phosphoserine and phosphothreonine substrates (in vitro). Has also been shown to dephosphorylate MAPT. Shows strong phosphatase activity towards complex carbohydrates in vitro, avoiding glycogen hyperphosphorylation which is associated with reduced branching and formation of insoluble aggregates. Forms a complex with NHLRC1/malin and HSP70, which suppresses the cellular toxicity of misfolded proteins by promoting their degradation through the ubiquitin-proteasome system (UPS). Acts as a scaffold protein to facilitate PPP1R3C/PTG ubiquitination by NHLRC1/malin. Also promotes proteasome-independent protein degradation through the macroautophagy pathway. In Rattus norvegicus (Rat), this protein is Laforin (Epm2a).